The chain runs to 329 residues: Cytosolic arginine sensor for mTORC1 subunit 2 (329 aa).

ACT domains lie at 72-139 (ADAT…MHTL) and 262-322 (ELWK…NALQ).

It belongs to the GATS family. As to quaternary structure, may form homodimers and heterodimers.

The protein localises to the cytoplasm. It localises to the cytosol. Its function is as follows. Functions as a negative regulator of the TORC1 signaling pathway. This is Cytosolic arginine sensor for mTORC1 subunit 2 from Xenopus laevis (African clawed frog).